Here is a 932-residue protein sequence, read N- to C-terminus: Protein translocase subunit SecA (932 aa).

ATP-binding positions include glutamine 90, 108–112 (GEGKT), and aspartate 498.

This sequence belongs to the SecA family. Monomer and homodimer. Part of the essential Sec protein translocation apparatus which comprises SecA, SecYEG and auxiliary proteins SecDF. Other proteins may also be involved.

Its subcellular location is the cell inner membrane. The protein resides in the cellular thylakoid membrane. The protein localises to the cytoplasm. The catalysed reaction is ATP + H2O + cellular proteinSide 1 = ADP + phosphate + cellular proteinSide 2.. Part of the Sec protein translocase complex. Interacts with the SecYEG preprotein conducting channel. Has a central role in coupling the hydrolysis of ATP to the transfer of proteins into and across the cell membrane, serving as an ATP-driven molecular motor driving the stepwise translocation of polypeptide chains across the membrane. Functionally, probably participates in protein translocation into and across both the cytoplasmic and thylakoid membranes in cyanobacterial cells. In Synechocystis sp. (strain ATCC 27184 / PCC 6803 / Kazusa), this protein is Protein translocase subunit SecA.